The chain runs to 718 residues: Quinolinate synthase, chloroplastic (718 aa).

Residues 1 to 22 (MALALSVAPTSSSLSSLLSRTP) show a composition bias toward low complexity. A disordered region spans residues 1–29 (MALALSVAPTSSSLSSLLSRTPNPSPNFR). The transit peptide at 1 to 70 (MALALSVAPT…VNASPFSISA (70 aa)) directs the protein to the chloroplast. Cysteine 132 acts as the Cysteine persulfide intermediate in catalysis. Positions 280 and 306 each coordinate iminosuccinate. Cysteine 360 lines the [4Fe-4S] cluster pocket. Residues 389 to 391 (YIN) and serine 411 each bind iminosuccinate. [4Fe-4S] cluster is bound at residue cysteine 484. Iminosuccinate contacts are provided by residues 510–512 (HLE) and threonine 535. Cysteine 640 serves as a coordination point for [4Fe-4S] cluster.

Belongs to the quinolinate synthase family. Type 1 subfamily. Homodimer. Interacts in vitro with NFS2, CpNIFS3 and AO. Part of a Cys defulfurase complex. It depends on [4Fe-4S] cluster as a cofactor. As to expression, expressed in roots, leaves, stems and flowers.

It localises to the plastid. The protein localises to the chloroplast. It carries out the reaction iminosuccinate + dihydroxyacetone phosphate = quinolinate + phosphate + 2 H2O + H(+). The protein operates within cofactor biosynthesis; NAD(+) biosynthesis; quinolinate from iminoaspartate: step 1/1. Catalyzes the condensation of iminoaspartate with dihydroxyacetone phosphate to form quinolinate. Can complement nadA-deficient E.coli mutant. Essential for the de novo synthesis of NAD. Also participates in cysteine desulfurization mediated by NFS2. Can activate the cysteine desulfurase activity of NFS2 in vitro. The chain is Quinolinate synthase, chloroplastic from Arabidopsis thaliana (Mouse-ear cress).